Consider the following 142-residue polypeptide: Small ribosomal subunit protein uS9 (142 aa).

This sequence belongs to the universal ribosomal protein uS9 family.

Its subcellular location is the cytoplasm. This Syntrichia ruralis (Great hairy screw-moss) protein is Small ribosomal subunit protein uS9 (RPS16).